Consider the following 37-residue polypeptide: U1-ectatotoxin-Eb1a subunit B (37 aa).

It belongs to the ectatomin family. Ectatomin-Eq subfamily. Heterodimer of subunits A and B; disulfide-linked. In terms of tissue distribution, expressed by the venom gland.

Its subcellular location is the secreted. It is found in the target cell membrane. The protein is U1-ectatotoxin-Eb1a subunit B of Ectatomma brunneum (Ant).